A 167-amino-acid chain; its full sequence is MLVYQDLLSGDELLSDSFTYKELENGVLWEVEGKWVTQGPVDVDIGANPSAEGGEDESVDDTAVKVVDIVDTFRLQEQPPFDKKSFVSYIKKYIKNLTAVLEPEKADEFKKGVEGATKFLLSKLKDLQFFVGESMKDDASVAFAYYKDGATNSTFLYFSHGLKEIKC.

The TCTP domain maps to 1–167; sequence MLVYQDLLSG…FSHGLKEIKC (167 aa).

The protein belongs to the TCTP family.

The protein resides in the cytoplasm. Involved in calcium binding and microtubule stabilization. The sequence is that of Translationally-controlled tumor protein homolog (TCTP) from Zea mays (Maize).